A 244-amino-acid chain; its full sequence is Small ribosomal subunit protein uS3 (244 aa).

The KH type-2 domain occupies 39–107; sequence VREMLRKKLA…PAHINVTEVR (69 aa). The tract at residues 213-244 is disordered; it reads VGQEKQDDSPRNDRNDRGDRGDRPSRPAREAR. Residues 216-244 are compositionally biased toward basic and acidic residues; that stretch reads EKQDDSPRNDRNDRGDRGDRPSRPAREAR.

Belongs to the universal ribosomal protein uS3 family. As to quaternary structure, part of the 30S ribosomal subunit. Forms a tight complex with proteins S10 and S14.

Binds the lower part of the 30S subunit head. Binds mRNA in the 70S ribosome, positioning it for translation. In Xanthomonas campestris pv. campestris (strain 8004), this protein is Small ribosomal subunit protein uS3.